Here is a 119-residue protein sequence, read N- to C-terminus: Membrane-anchored ubiquitin-fold protein 1 (119 aa).

Residues 9–75 enclose the Ubiquitin-like domain; the sequence is FEIKFRLPDG…LENNKTLSEC (67 aa). Residue Cys-116 is modified to Cysteine methyl ester. A lipid anchor (S-farnesyl cysteine) is attached at Cys-116. A propeptide spans 117–119 (removed in mature form); sequence SIM.

Its subcellular location is the cell membrane. Its function is as follows. May serve as docking site to facilitate the association of other proteins to the plasma membrane. This chain is Membrane-anchored ubiquitin-fold protein 1 (MUB1), found in Oryza sativa subsp. japonica (Rice).